Consider the following 4299-residue polypeptide: MDNIYQRIENYLIKLFQTISETNNNNNNNNTNNNVGIKFENDLLLVNELGSIILKELVLEEEIGLVASLLFTGDHSLLKYLEKSSTISNKENVKIKVSILNLIAEFIEILQVRTDDYAIAIKNTCVLVFRKDQSHSVQAAAFGPIKKILHLMSRVLKQGSIVAESFGVSEMTQLFLLQFTCGKLTQTVRGEIIVVLGLFTEYFSSNMCDRNQQLSFIFMETLGGQLRSKSPESTLIQSCLKGLNSLLVHFSGDFIASDPKNVQLIYQYVYICLDPASSTQRFEIPRAAMKIVARHAVLLRQYLAEHSQPFYTRIEHWCNHINKLNRDIAFTAVDSFFQQISKELTSGNRSLEADQSTFKFFIRKFYSIFENNNSSRFELSIAIRGCGRFASPVKSFMGEWELKSLLNSLFKFSEKLMVVKIENIDEITLHLSSFINAFACILYELNELEFWYLDHIEQVLETYFIIFPHLFVKSRDRYFKAVNRLISSLFYHGEYLKILLSRFVKKGLLITFSKPNDSIKNLITTANTPFYQVYKDLWYNLLNPTIDTIDKDLNSTIKKENNNNNNNKNKNNNNNQTLTKEEISKSIKKLVYDEIVSSILSIIKKLDLQYQKDENDNNSNSNSNNNNNNDQDNNKISIIEYESEINQLKPVTSKDIELFLGLVEFFKLFISKYNTELFVQWIYIFGKEMISFSKKYPLISGFYKLVQIVMQICKSQKYFNELQQDDNINSVIFNNQIIDEQLQQQQDIMDIDDTDNNSNSNNKINKKLTNSLEEDKNNCFILFKKYIKEVSNFISHYKDELLSSCIELLLSLPKQLISIPLLVPIANLAFQYGISYLPLAHVGLNAIEYWNLVVPDQVHKHLDQLLPSLNDYLKISTNSSDSTSGGDIDIDSGGSMGGGGVVPPPSSSSRHRKMKFKSNSSLIDPKQLQFKTSIEDLQNRIIRLLGQLGGDNVHFLGKVSLVGEEIVNGVAWDTEPKVLIKIPFADQNNIDIYLDVILPNVVNLAEKSPNRQIKVAAGELLHSVLLMMIGNSANQSQANQISYSRLYRKIFPSLICLSTDVEQVTKQLFQPLVFQMIHWFTRNKKQESDDTMNLLNAIVDAVGNPLDGARRDFAGQCLCEFAKWSLKNTSVKQQEKNAFNFKSILKRIYSLAHHPDPYKRLGAAISFNQLYRIFREEDSLVDQFIFEILHNIFFSLRIGDDLTNTSSSKNNSNSNSNNNNNNNNNSEDGTEDSIVEIASKYSNVLAALTKVIIKRADMLNKPSNTRREHKDLSQFVQWVFQNGCSRTESIVRYESMILFTQLVTLLPNIKTPLQWVKERIKSNGIQFIVSIAEQQGGGVGGGSSNGNTSLGRIPKIEIGKHKDIEFWFRNLSTSLNIYLWFFSEGFFEPIQILTSREFKSSLLSSAFHTFTTQFSMLNFNSNLKTNQQQQQQQVSMFSSMTPKEIDQFNRLKCNVITNLFGLYILLLEKYKFEQVIDYGGVAFVQLLVKCLMDPQSVGFVNNYLEEREVELSKSSRQDIRNLMSRTFKFPPLLEIINNIIKLLIQIKPKYNDILHKELMEYILPNNSNNNNNSSSSGNNKSMFSLIDIRQLINTEGTDRLIHLIHSYQILYKYNLLDSILLENYNEQSEQGIQDLPKSSLEFSEFIFDYLFNNCENLSPSKLLISKELIQLALTIGIKPIKLLSLIINPNVQNTTTTTTTTSTTTTTTTTTTSTNNNNDNNNEFIKDIHDIFYKTLFTEINNYISNNFQLFLPLLANRIIETNQIHKVLNDVCIMKQQQQPNRGFKDIIESIVLFLNSISEWTLNSNLKLVEKENIIEFTKNLIKIDPIQFFENKHCYEFVYNIITNYLCRSNPLTFKNKVLVLLPYLLSYPKHNNFDLIKQKLNEIVVYDFPLNSKDLTVKSPIYNEYITCIERLLETFELTKNPLVIDTLLHVLKETDHTHINYINLSIERSILSTNDIEAKEIFSHCFELFLNHYDELKITLIDKFCVPLISHMKENILVQIFSQHLSSLMSIIQPLQPKYLSDSQERKSSIIEKICCFHLIEALYQSLPSAIIKEKINPFFYDKPDGKGTELTAAIMKAAHSAKSEKLTSDDKYVTRSLCTKYHGAAFSALASVIVSTQTKENFFHVFFFKENKDKNEYLWENIIDTDQVFNFQPETNFLVSYSTPQSLFANDLRYLSSQYLVDSSLSQDFIAKNFLEGDNNSTTNNNNGDDGIIMQGQSQSGDNENQISNDIEIDQVNSNPSMIAMLKIIDFYQKKFVVTPPSSILFGQQSQQPKPTVGDMPKWMFEIYQKLQQGVHPNIVIFMIKIIINRPQYFERFHELWIPILMDYVVSEGNGGNGLHYFVRDVCFILLKWPNIYKSQDGGGGTTLEKHLSKFVNHLMKNTYCTDRRILKSNLNIVKSFVERWKSLFKVDKSIILELLSTKGDFKSKSRQIKTTGLVLLSILLSNGYPAYDKEYDSNTISEFKFYQVLLDHLQDFKELYDAASEVCGMILLYLSKQQQSQQQQQQSIFPQLLKDKINSILNNNENQRAFSCLYFIGLHYPLFLQGFYGKIFNLLPQISNETRLIALNIIHWCVEDIQDLYTKLKSNNIENLIRIREGEIQVVILRILYKLVQKRDTTFGTVNQILSLLLSNNWFTSNVTNEYSRSLYYDIIIYIYNNFIEYQDQSNENSKDLVLSLLIGLSDESDSINKKLLQFWDNNSKTLSASSNQRLQQFFDIMYSPETESKWVANSCCLLFQLCNRSSDFTKLLFDKPLSECTFKEVQVDSSWQHRTLNMNPLFSSSQYGIDDATTDESNGDSMQLDEIRATQAPNFTLTQTAFSEFYPSSSQSYGGTNNNTGSSQLSSSSSSSGSQSSSQNNSSSKRKQKITNDPKLINNSELRRRFKKIDDRGADERIVKFARLQVKRNIEREAYFEKSKQARENQITMIRKYRVGELPDIQIKLQDIIKPLQLLCQRDSTIGVNVFSSLFTALYKNTPKESIRTFQCNIKKLIDSIVERCKFNSTLVSSILNISEKNLEFSPEFSKIKDISLNSNNHPMAIILCEKLILSLQNTTKASTTNQAQKLQQQQQLNQGWDSLRELYKSLKEDDIIMGLIEKQMGGDIPYTKKALEFELKGDWVNVLKVYDEATSKLESGELNQYQGNLSESETALWENGRLECFTKLCNWSALKDNFNSYYPNPNQIFKEKNCDLLLSYFFEFNLKVKENWNYLYQFIADLANTKQYQYLENKFPGELAFLEVTRSDHNKASYYVSKFYQAFKHQWSSSHPLAIESRHRILQPLQKIVEVEEFLNLTSTPIINTLKLDTLLTQWKSRFPTKLDDIMVWDDLIFYRSVLLEKIYERFSSFTSDKSSDEKVKSTLIQERAILYHKMSKGARKLGNIVVSEIYFRQAVKSYPKTKDNDLAFPLVTSLIDIYCTKARNSPSPIETLDRFVKALKFIESKKDEESIINSNENLQKYLMMHGDIFWDIYQLDKKLGSTLVIDSFKKNSLPINLTSIPINSLKDELFNSTFKCYSESIKLHQKSTNLLNTTSSSPSLSISSSSSPYSSTSSSSQPKLSNEILIEKTKTKSAHLKFANFCDNILKDKISQQTTPTQFNEEVIDLATSVIVSTLEAIKEEIPGSVDKFPRLLEILTQFEQYSVIAREFKSRVSTIPCWMFIRWISQMFPYLDLPQGPLILPILLEIAKWYPQAIYFPFKISSEQFGPLAKKISAPLEKELINPLLDTLVIEFQRLTHPEHRFKDYMEEMKSLIKATPKDLNAIAKLNNEIYDDSFNPSTVSGDYNLKFAKEHEASYLSNFGKDSTKLARMDQKKFLEIFAEMSGNMNKNMKPNSTASMKLKDFSGWLADFDRSNYQTSHQMEIPGQYDGIGKPQPETHVTISSFDTNVLVMGSLRKPKRVKIHGNDELDYPFLIKGGEDLRLDQRIQQLFGIMNEILKRDTACNKRSLNVTTYQVVPMTSKVGIIEWLNDTKPLREILEEQLAHQLKTPRSNVSISKLESTKYHNDWINSFAKYLKPNSPVGPLYQQMFIHATRDDCAKKLEKQHSKVPENLLQNGIWSLSSSPESYLFIRNSFARSLASFSVCSYVIGIGDRHLENFLISQRDGRLIGIDFGHAFGTATQFLPIPELMPFRLTRQFTSFLRPLDSVGLLNHNMTYTLTALQNQKEILLTTMDVFVKEPLLDWSKLATRLVKEQGKHPKDTKNVWFPKQKIQIAKKKLELVNPAYITLEELSGSVHSGLPYEKALSEIIKGDPKHNIRAKVNKVCSSVKEQIDCLIDQSTDPNILSRAWVGWNGAL.

Positions 551–590 form a coiled coil; it reads KDLNSTIKKENNNNNNNKNKNNNNNQTLTKEEISKSIKKL. 4 disordered regions span residues 557–577, 613–633, 878–917, and 1206–1230; these read IKKE…NNQT, DEND…DQDN, NSSD…MKFK, and SSSK…EDGT. 4 stretches are compositionally biased toward low complexity: residues 562-575, 617-631, 878-893, and 1206-1226; these read NNNN…NNNN, NNSN…NNDQ, NSSD…IDSG, and SSSK…NNNS. Ser-2789 is modified (phosphoserine; by autocatalysis). Phosphothreonine; by autocatalysis is present on residues Thr-2814 and Thr-2822. The span at 2832-2867 shows a compositional bias: low complexity; that stretch reads SSSQSYGGTNNNTGSSQLSSSSSSSGSQSSSQNNSS. 2 disordered regions span residues 2832-2881 and 3535-3559; these read SSSQ…PKLI and TTSS…SSSQ. An FAT domain is found at 3031-3707; sequence KIKDISLNSN…YFPFKISSEQ (677 aa). In terms of domain architecture, PI3K/PI4K catalytic spans 3887 to 4226; it reads FDTNVLVMGS…AKKKLELVNP (340 aa). The interval 3893-3899 is G-loop; sequence VMGSLRK. The catalytic loop stretch occupies residues 4092–4100; sequence GIGDRHLEN. An activation loop region spans residues 4112-4137; the sequence is GIDFGHAFGTATQFLPIPELMPFRLT. Positions 4267–4299 constitute an FATC domain; it reads VCSSVKEQIDCLIDQSTDPNILSRAWVGWNGAL.

It belongs to the PI3/PI4-kinase family. DNAPK subfamily. May be phosphorylated upon DNA damage. Could be autophosphorylated. Autophosphorylation induces a conformational change that leads to remodeling of the DNA-PK complex, requisite for efficient end processing and DNA repair. Post-translationally, autophosphorylated on Ser-2789, Thr-2814 and Thr-2822. Ser-2789 is a DNA damage-inducible phosphorylation site (inducible with ionizing radiation, IR).

The protein localises to the nucleus. It is found in the nucleolus. The catalysed reaction is L-seryl-[protein] + ATP = O-phospho-L-seryl-[protein] + ADP + H(+). It catalyses the reaction L-threonyl-[protein] + ATP = O-phospho-L-threonyl-[protein] + ADP + H(+). Its activity is regulated as follows. Inhibited by wortmannin. Activity of the enzyme seems to be attenuated by autophosphorylation. Functionally, serine/threonine-protein kinase that acts as a molecular sensor for DNA damage. Is recruited to DNA ends by the Ku70/Ku80 heterodimer and is involved in DNA non-homologous end joining (NHEJ) required for double-strand break (DSB) repair and V(D)J recombination. This activity is only apparent when DNA damage is administered in G1 phase of the cell cycle. Required for efficient signaling of DNA double-stranded breaks via phosphorylation of H2AX during G1. The sequence is that of DNA-dependent protein kinase catalytic subunit (dnapkcs) from Dictyostelium discoideum (Social amoeba).